Reading from the N-terminus, the 276-residue chain is Ribosomal RNA small subunit methyltransferase A (276 aa).

S-adenosyl-L-methionine-binding residues include Asn19, Leu21, Gly46, Glu71, Asp94, and Asn117.

It belongs to the class I-like SAM-binding methyltransferase superfamily. rRNA adenine N(6)-methyltransferase family. RsmA subfamily.

Its subcellular location is the cytoplasm. The catalysed reaction is adenosine(1518)/adenosine(1519) in 16S rRNA + 4 S-adenosyl-L-methionine = N(6)-dimethyladenosine(1518)/N(6)-dimethyladenosine(1519) in 16S rRNA + 4 S-adenosyl-L-homocysteine + 4 H(+). Specifically dimethylates two adjacent adenosines (A1518 and A1519) in the loop of a conserved hairpin near the 3'-end of 16S rRNA in the 30S particle. May play a critical role in biogenesis of 30S subunits. This is Ribosomal RNA small subunit methyltransferase A from Burkholderia ambifaria (strain ATCC BAA-244 / DSM 16087 / CCUG 44356 / LMG 19182 / AMMD) (Burkholderia cepacia (strain AMMD)).